The sequence spans 347 residues: uncharacterized protein (347 aa).

The first 26 residues, 1–26 (MQGRVAGSCAPLGLLLVCLHLPGLFA), serve as a signal peptide directing secretion. Polar residues predominate over residues 41 to 60 (GTNLPQLGQPSSTGPSNSEH). Disordered stretches follow at residues 41–110 (GTNL…MDSW) and 148–189 (SGPL…AGGK). Over residues 148–157 (SGPLPGESSP) the composition is skewed to low complexity.

Binds to numerous extracellular matrix proteins.

It localises to the secreted. It is found in the extracellular space. Its subcellular location is the extracellular matrix. This is an uncharacterized protein from Pan troglodytes (Chimpanzee).